The following is a 183-amino-acid chain: Small ribosomal subunit protein cS23y (183 aa).

It belongs to the chloroplast-specific ribosomal protein cS23 family. As to quaternary structure, part of the 30S ribosomal subunit.

The protein resides in the plastid. Its subcellular location is the chloroplast. Functionally, component of the chloroplast ribosome (chloro-ribosome), a dedicated translation machinery responsible for the synthesis of chloroplast genome-encoded proteins, including proteins of the transcription and translation machinery and components of the photosynthetic apparatus. This Arabidopsis thaliana (Mouse-ear cress) protein is Small ribosomal subunit protein cS23y.